The chain runs to 78 residues: Protein SlyX homolog (78 aa).

This sequence belongs to the SlyX family.

The sequence is that of Protein SlyX homolog from Xylella fastidiosa (strain M23).